A 2073-amino-acid polypeptide reads, in one-letter code: Histone acetyltransferase KAT6B (2073 aa).

In terms of domain architecture, SAMD1-like winged helix (WH) spans 1–77; that stretch reads MVKLANPLYT…LASYKDPDNP (77 aa). A disordered region spans residues 72–97; it reads KDPDNPGRFSSVKPGTFPKSAKGSRG. The region spanning 103-176 is the H15 domain; sequence RNVDWNKLLR…KDGPQYRVNY (74 aa). 2 consecutive PHD-type zinc fingers follow at residues 213–272 and 269–320; these read IPIC…CKTC and CKTC…CRPK. A Phosphoserine modification is found at Ser-355. Disordered stretches follow at residues 360–409, 442–531, 553–583, and 639–663; these read EGSM…RPGA, FTPS…VPSL, TQGQ…TAKS, and VTPQ…PDQD. Positions 361–717 are negatively regulates HAT activity; the sequence is GSMNAFTGRG…ECESGVEDCG (357 aa). Over residues 379–399 the composition is skewed to polar residues; sequence KVCTTPSSGHAASGKDSSSRL. Over residues 447 to 460 the composition is skewed to basic and acidic residues; sequence DGRRSRGEIIDFSK. Polar residues predominate over residues 470-485; it reads QKQSCTSHVLATGTTQ. Residues 488–499 show a composition bias toward pro residues; sequence KPPPSSLPPPTP. Low complexity predominate over residues 501-531; sequence SGQSPSSQKSSTATSSPSPQSSSSQCSVPSL. Ser-647 is modified (phosphoserine). Residue Lys-673 forms a Glycyl lysine isopeptide (Lys-Gly) (interchain with G-Cter in SUMO2) linkage. The MYST-type HAT domain occupies 715 to 989; it reads DCGRYPSVIE…LDPDSLRWTP (275 aa). A catalytic region spans residues 718–1008; that stretch reads RYPSVIEFGK…EEEREAEKEA (291 aa). A C2HC MYST-type zinc finger spans residues 748–773; the sequence is LYLCEFCLKYMKSKNILLRHSKKCGW. Residues 752 to 1008 are interaction with BRPF1; sequence EFCLKYMKSK…EEEREAEKEA (257 aa). Lys-815 is modified (N6-acetyllysine; by autocatalysis). Acetyl-CoA-binding positions include 856–860 and 865–871; these read SCIMI and QRQGFGR. Glu-891 serves as the catalytic Proton donor/acceptor. Ser-895 contributes to the acetyl-CoA binding site. Disordered regions lie at residues 1022–1452, 1484–1538, and 1580–1619; these read EQEI…FKEV, SCNS…MEID, and QSPQ…SPSV. Residues 1025-1043 are compositionally biased toward polar residues; the sequence is ILSTRANSRQSPAKVQSKN. Lys-1038, Lys-1042, and Lys-1044 each carry N6-acetyllysine. Ser-1048 is subject to Phosphoserine. The segment covering 1069–1105 has biased composition (acidic residues); that stretch reads SEEEEEEEDEEEEEEEEEEEEDEEEEEEEEEEEEEEN. Residues 1106 to 1117 are compositionally biased toward polar residues; that stretch reads IQSSPPRLTKPQ. Positions 1121–1140 are enriched in basic residues; the sequence is IKRKRPFVLKKKRGRKRRRI. Over residues 1142–1155 the composition is skewed to low complexity; it reads SSVTTETISETTEV. Basic residues predominate over residues 1187-1200; it reads PVLRKAFQHQPGKK. Composition is skewed to basic and acidic residues over residues 1229 to 1243, 1306 to 1315, and 1341 to 1350; these read SNLK…EPLK, RIEEEVKETG, and EKPEDDLIKP. Positions 1351–1374 are enriched in acidic residues; the sequence is EEEEEEEEEEEEEEEEEEGEEEEG. Composition is skewed to basic and acidic residues over residues 1378-1390 and 1396-1407; these read VEKD…SQEK and STEKEDSARLDD. The span at 1408 to 1417 shows a compositional bias: acidic residues; sequence HEEEEEEDEE. Residues 1433-1452 are compositionally biased toward basic and acidic residues; it reads HMESAEVEKEELPRESFKEV. The span at 1498–1507 shows a compositional bias: acidic residues; that stretch reads AVPESDEEPP. Residues 1513-1529 are compositionally biased toward basic and acidic residues; sequence QKQDQKNSKEVDTEFKE. Residues 1560 to 2073 form an interaction with RUNX1 and RUNX2 region; that stretch reads QDCAETQEAC…QSLNGSYMRR (514 aa). The segment covering 1580–1591 has biased composition (polar residues); the sequence is QSPQIATTLDDC. Over residues 1594 to 1611 the composition is skewed to low complexity; that stretch reads SDHSSPVSSVHSHPGQSV.

It belongs to the MYST (SAS/MOZ) family. Component of the MOZ/MORF complex composed at least of ING5, KAT6A, KAT6B, MEAF6 and one of BRPF1, BRD1/BRPF2 and BRPF3. Interacts with RUNX1 and RUNX2. Post-translationally, autoacetylated. Autoacetylation at Lys-815 is required for proper function. In terms of tissue distribution, ubiquitously expressed, with high levels in heart, pancreas, testis and ovary.

The protein localises to the nucleus. The enzyme catalyses L-lysyl-[protein] + acetyl-CoA = N(6)-acetyl-L-lysyl-[protein] + CoA + H(+). In terms of biological role, histone acetyltransferase which may be involved in both positive and negative regulation of transcription. Required for RUNX2-dependent transcriptional activation. May be involved in cerebral cortex development. Component of the MOZ/MORF complex which has a histone H3 acetyltransferase activity. The protein is Histone acetyltransferase KAT6B (KAT6B) of Homo sapiens (Human).